Here is a 421-residue protein sequence, read N- to C-terminus: Testin (421 aa).

Residues 92 to 199 (MILTNPVAAK…GDVKLPREMD (108 aa)) enclose the PET domain. The segment at 133-164 (EKQPVAGSEGAQYRKKQLAKQLPAHDQDPSKC) is disordered. Basic and acidic residues predominate over residues 155–164 (PAHDQDPSKC). 3 LIM zinc-binding domains span residues 234–297 (YSCY…CDSE), 299–359 (PRCA…NHAV), and 362–421 (QGCH…KMMS).

This sequence belongs to the prickle / espinas / testin family. As to quaternary structure, interacts via LIM domain 1 with ZYX. Interacts (via LIM domain 3) with ENAH and VASP. Interacts with ALKBH4, talin, actin, alpha-actinin, GRIP1 and PXN. Interacts (via LIM domain 2) with ACTL7A (via N-terminus). Heterodimer with ACTL7A; the heterodimer interacts with ENAH to form a heterotrimer.

Its subcellular location is the cytoplasm. It is found in the cell junction. The protein localises to the focal adhesion. Scaffold protein that may play a role in cell adhesion, cell spreading and in the reorganization of the actin cytoskeleton. Plays a role in the regulation of cell proliferation. May act as a tumor suppressor. This Equus caballus (Horse) protein is Testin (TES).